The sequence spans 398 residues: UPF0496 protein At5g66660 (398 aa).

Helical transmembrane passes span valine 240–serine 260 and proline 263–phenylalanine 283.

It belongs to the UPF0496 family.

The protein localises to the membrane. In Arabidopsis thaliana (Mouse-ear cress), this protein is UPF0496 protein At5g66660.